Consider the following 386-residue polypeptide: Erythronate-4-phosphate dehydrogenase (386 aa).

Substrate is bound by residues Ser59 and Thr81. Residue Asp162 coordinates NAD(+). Arg239 is a catalytic residue. Asp262 contacts NAD(+). The active site involves Glu267. His284 acts as the Proton donor in catalysis. Residue Gly287 participates in NAD(+) binding. Substrate is bound at residue Tyr288.

It belongs to the D-isomer specific 2-hydroxyacid dehydrogenase family. PdxB subfamily. In terms of assembly, homodimer.

The protein localises to the cytoplasm. The enzyme catalyses 4-phospho-D-erythronate + NAD(+) = (R)-3-hydroxy-2-oxo-4-phosphooxybutanoate + NADH + H(+). The protein operates within cofactor biosynthesis; pyridoxine 5'-phosphate biosynthesis; pyridoxine 5'-phosphate from D-erythrose 4-phosphate: step 2/5. Catalyzes the oxidation of erythronate-4-phosphate to 3-hydroxy-2-oxo-4-phosphonooxybutanoate. The chain is Erythronate-4-phosphate dehydrogenase from Psychrobacter cryohalolentis (strain ATCC BAA-1226 / DSM 17306 / VKM B-2378 / K5).